A 344-amino-acid chain; its full sequence is Dihydroorotase (344 aa).

Zn(2+) is bound by residues H13 and H15. Substrate-binding positions include 15–17 and N41; that span reads HLR. Residues K99, H136, and H174 each coordinate Zn(2+). K99 carries the N6-carboxylysine modification. Residue H136 coordinates substrate. L219 serves as a coordination point for substrate. D247 serves as a coordination point for Zn(2+). Residue D247 is part of the active site. 2 residues coordinate substrate: H251 and A263.

The protein belongs to the metallo-dependent hydrolases superfamily. DHOase family. Class II DHOase subfamily. Homodimer. Zn(2+) serves as cofactor.

It carries out the reaction (S)-dihydroorotate + H2O = N-carbamoyl-L-aspartate + H(+). It participates in pyrimidine metabolism; UMP biosynthesis via de novo pathway; (S)-dihydroorotate from bicarbonate: step 3/3. Its function is as follows. Catalyzes the reversible cyclization of carbamoyl aspartate to dihydroorotate. The protein is Dihydroorotase of Shewanella denitrificans (strain OS217 / ATCC BAA-1090 / DSM 15013).